Here is a 1059-residue protein sequence, read N- to C-terminus: Probable sucrose-phosphate synthase (1059 aa).

Disordered regions lie at residues alanine 95–arginine 145, arginine 671–leucine 695, aspartate 710–aspartate 731, and serine 748–phenylalanine 769. Basic and acidic residues predominate over residues arginine 102–threonine 114. A compositionally biased stretch (acidic residues) spans glycine 681–proline 691.

Belongs to the glycosyltransferase 1 family. In terms of assembly, homodimer or homotetramer.

It catalyses the reaction beta-D-fructose 6-phosphate + UDP-alpha-D-glucose = sucrose 6(F)-phosphate + UDP + H(+). The protein operates within glycan biosynthesis; sucrose biosynthesis; sucrose from D-fructose 6-phosphate and UDP-alpha-D-glucose: step 1/2. With respect to regulation, activity is regulated by phosphorylation and moderated by concentration of metabolites and light. Its function is as follows. Plays a role in photosynthetic sucrose synthesis by catalyzing the rate-limiting step of sucrose biosynthesis from UDP-glucose and fructose- 6-phosphate. Involved in the regulation of carbon partitioning in the leaves of plants. May regulate the synthesis of sucrose and therefore play a major role as a limiting factor in the export of photoassimilates out of the leaf. Plays a role for sucrose availability that is essential for plant growth and fiber elongation. In Vicia faba (Broad bean), this protein is Probable sucrose-phosphate synthase (SPS).